The primary structure comprises 85 residues: Large ribosomal subunit protein bL27 (85 aa).

It belongs to the bacterial ribosomal protein bL27 family.

This Leptospira biflexa serovar Patoc (strain Patoc 1 / Ames) protein is Large ribosomal subunit protein bL27.